Here is a 106-residue protein sequence, read N- to C-terminus: ATPase inhibitor, mitochondrial (106 aa).

The transit peptide at 1-25 (MAGSALAVRARFGVWGMKVLQTRGF) directs the protein to the mitochondrion. The interval 26-52 (VSDSSDSMDTGAGSIREAGGAFGKREK) is N-terminal inhibitory region. A disordered region spans residues 26–58 (VSDSSDSMDTGAGSIREAGGAFGKREKAEEDRY). Position 39 is a phosphoserine (S39). The segment covering 48–58 (GKREKAEEDRY) has biased composition (basic and acidic residues). Residues 60-106 (REKTKEQLAALRKHHEDEIDHHSKEIERLQKQIERHKKKIQQLKNNH) are a coiled coil. Residues 74–106 (HEDEIDHHSKEIERLQKQIERHKKKIQQLKNNH) form an antiparallel alpha-helical coiled coil region region. At K103 the chain carries N6-succinyllysine.

Belongs to the ATPase inhibitor family. Homodimer; represents the active form and is present at a pH value below 6.5. Homotetramer; represents the inactive form and is present at a pH value above 7.0.

It is found in the mitochondrion. Functionally, endogenous F(1)F(o)-ATPase inhibitor limiting ATP depletion when the mitochondrial membrane potential falls below a threshold and the F(1)F(o)-ATP synthase starts hydrolyzing ATP to pump protons out of the mitochondrial matrix. Required to avoid the consumption of cellular ATP when the F(1)F(o)-ATP synthase enzyme acts as an ATP hydrolase. Indirectly acts as a regulator of heme synthesis in erythroid tissues: regulates heme synthesis by modulating the mitochondrial pH and redox potential, allowing FECH to efficiently catalyze the incorporation of iron into protoporphyrin IX to produce heme. The protein is ATPase inhibitor, mitochondrial of Mus musculus (Mouse).